A 674-amino-acid polypeptide reads, in one-letter code: Transcription activator of gluconeogenesis PMAA_028970 (674 aa).

A disordered region spans residues 1–46 (MMDTDKDDLPSATDHSEHESGDAVKVEGGASKTASNSKDPSRPRRK). Over residues 14–25 (DHSEHESGDAVK) the composition is skewed to basic and acidic residues. The zn(2)-C6 fungal-type DNA-binding region spans 52-80 (CFACQRAHLTCGDERPCQRCIKRGLQDAC). Disordered stretches follow at residues 117 to 181 (ISPT…ATPA), 250 to 321 (TGAG…SGLY), 344 to 374 (IGSN…SPMK), and 519 to 557 (NLNV…PGPN). Positions 120-148 (TEYTQNGTNNAQQQQQKSGTIYASSTPSY) are enriched in polar residues. The span at 149-163 (NNNNGTFDTNNATNT) shows a compositional bias: low complexity. 2 stretches are compositionally biased toward polar residues: residues 269 to 278 (GQRSNSQQFG) and 285 to 294 (TTESPSQQSF). Composition is skewed to low complexity over residues 348–366 (TFAS…IAPS) and 529–540 (NTSSQSDSTSSS).

This sequence belongs to the ERT1/acuK family.

It localises to the nucleus. Its function is as follows. Transcription factor which regulates nonfermentable carbon utilization. Activator of gluconeogenetic genes. The polypeptide is Transcription activator of gluconeogenesis PMAA_028970 (Talaromyces marneffei (strain ATCC 18224 / CBS 334.59 / QM 7333) (Penicillium marneffei)).